The following is a 207-amino-acid chain: Outer-membrane lipoprotein LolB (207 aa).

Residues 1-21 (MPIRKVSLLRLIPLASLVLAA) form the signal peptide. The N-palmitoyl cysteine moiety is linked to residue C22. C22 carries the S-diacylglycerol cysteine lipid modification.

The protein belongs to the LolB family. Monomer.

Its subcellular location is the cell outer membrane. In terms of biological role, plays a critical role in the incorporation of lipoproteins in the outer membrane after they are released by the LolA protein. The protein is Outer-membrane lipoprotein LolB of Serratia proteamaculans (strain 568).